The primary structure comprises 174 residues: Putative FAS1 domain-containing protein 096L (174 aa).

The FAS1 domain maps to 36–171 (PDTLWSKLNE…GIIHLMEEVY (136 aa)).

In Acheta domesticus (House cricket), this protein is Putative FAS1 domain-containing protein 096L.